Consider the following 110-residue polypeptide: UPF0122 protein GWCH70_1086 (110 aa).

This sequence belongs to the UPF0122 family.

Might take part in the signal recognition particle (SRP) pathway. This is inferred from the conservation of its genetic proximity to ftsY/ffh. May be a regulatory protein. The polypeptide is UPF0122 protein GWCH70_1086 (Geobacillus sp. (strain WCH70)).